Here is a 502-residue protein sequence, read N- to C-terminus: Glycerol kinase (502 aa).

ADP is bound at residue Thr14. Thr14, Thr15, and Ser16 together coordinate ATP. Thr14 serves as a coordination point for sn-glycerol 3-phosphate. An ADP-binding site is contributed by Arg18. Sn-glycerol 3-phosphate-binding residues include Arg84, Glu85, and Tyr136. Glycerol-binding residues include Arg84, Glu85, and Tyr136. His232 is modified (phosphohistidine; by HPr). Asp246 contacts sn-glycerol 3-phosphate. Glycerol-binding residues include Asp246 and Gln247. ADP-binding residues include Thr268 and Gly311. Residues Thr268, Gly311, Gln315, and Gly412 each contribute to the ATP site. ADP contacts are provided by Gly412 and Asn416.

Belongs to the FGGY kinase family. Homotetramer and homodimer (in equilibrium). The phosphoenolpyruvate-dependent sugar phosphotransferase system (PTS), including enzyme I, and histidine-containing protein (HPr) are required for the phosphorylation, which leads to the activation of the enzyme.

The enzyme catalyses glycerol + ATP = sn-glycerol 3-phosphate + ADP + H(+). The protein operates within polyol metabolism; glycerol degradation via glycerol kinase pathway; sn-glycerol 3-phosphate from glycerol: step 1/1. With respect to regulation, activated by phosphorylation and inhibited by fructose 1,6-bisphosphate (FBP). Functionally, key enzyme in the regulation of glycerol uptake and metabolism. Catalyzes the phosphorylation of glycerol to yield sn-glycerol 3-phosphate. The sequence is that of Glycerol kinase from Streptococcus pneumoniae serotype 2 (strain D39 / NCTC 7466).